We begin with the raw amino-acid sequence, 346 residues long: Threonylcarbamoyl-AMP synthase (346 aa).

The 188-residue stretch at 18–205 (DPQIAQAAAL…IPVLLRPGGI (188 aa)) folds into the YrdC-like domain. Threonine 40 serves as a coordination point for L-threonine. Arginine 63 and asparagine 67 together coordinate ATP. Histidine 72 serves as a coordination point for L-threonine. Threonine 123 is a binding site for ATP. Residues arginine 127 and alanine 147 each contribute to the L-threonine site. Residues serine 149 and serine 157 each contribute to the ATP site. Serine 187 contributes to the L-threonine binding site. ATP is bound by residues arginine 201 and tyrosine 240.

It belongs to the SUA5 family.

Its subcellular location is the cytoplasm. It carries out the reaction L-threonine + hydrogencarbonate + ATP = L-threonylcarbamoyladenylate + diphosphate + H2O. In terms of biological role, required for the formation of a threonylcarbamoyl group on adenosine at position 37 (t(6)A37) in tRNAs that read codons beginning with adenine. Catalyzes the conversion of L-threonine, HCO(3)(-)/CO(2) and ATP to give threonylcarbamoyl-AMP (TC-AMP) as the acyladenylate intermediate, with the release of diphosphate. Is also able to catalyze the reverse reaction in vitro, i.e. the formation of ATP from TC-AMP and PPi. The polypeptide is Threonylcarbamoyl-AMP synthase (ywlC) (Bacillus subtilis (strain 168)).